An 80-amino-acid polypeptide reads, in one-letter code: uncharacterized protein (80 aa).

The signal sequence occupies residues M1–A15. Low complexity predominate over residues N23–S44. Positions N23–Y52 are disordered. N-linked (GlcNAc...) asparagine glycans are attached at residues N29, N30, N36, N39, and N64.

Its subcellular location is the secreted. This is an uncharacterized protein from Dictyostelium discoideum (Social amoeba).